The chain runs to 283 residues: Hydroxyacylglutathione hydrolase-like protein (283 aa).

Positions 54, 56, 58, 59, 110, 134, and 173 each coordinate Zn(2+).

Belongs to the metallo-beta-lactamase superfamily. Glyoxalase II family. It depends on Zn(2+) as a cofactor.

Its function is as follows. Hydrolase acting on ester bonds. The sequence is that of Hydroxyacylglutathione hydrolase-like protein (Haghl) from Mus musculus (Mouse).